The sequence spans 279 residues: Diaminopimelate epimerase 1 (279 aa).

Substrate-binding residues include N13 and N66. C75 acts as the Proton donor in catalysis. Residues 76-77 (GN), N164, N197, and 215-216 (ER) each bind substrate. Catalysis depends on C224, which acts as the Proton acceptor. 225-226 (GT) contacts substrate.

Belongs to the diaminopimelate epimerase family. As to quaternary structure, homodimer.

The protein resides in the cytoplasm. The catalysed reaction is (2S,6S)-2,6-diaminopimelate = meso-2,6-diaminopimelate. Its pathway is amino-acid biosynthesis; L-lysine biosynthesis via DAP pathway; DL-2,6-diaminopimelate from LL-2,6-diaminopimelate: step 1/1. Catalyzes the stereoinversion of LL-2,6-diaminopimelate (L,L-DAP) to meso-diaminopimelate (meso-DAP), a precursor of L-lysine and an essential component of the bacterial peptidoglycan. This Nostoc sp. (strain PCC 7120 / SAG 25.82 / UTEX 2576) protein is Diaminopimelate epimerase 1.